Reading from the N-terminus, the 240-residue chain is 1-(5-phosphoribosyl)-5-[(5-phosphoribosylamino)methylideneamino] imidazole-4-carboxamide isomerase (240 aa).

Asp-8 functions as the Proton acceptor in the catalytic mechanism. The Proton donor role is filled by Asp-129.

Belongs to the HisA/HisF family.

The protein resides in the cytoplasm. The enzyme catalyses 1-(5-phospho-beta-D-ribosyl)-5-[(5-phospho-beta-D-ribosylamino)methylideneamino]imidazole-4-carboxamide = 5-[(5-phospho-1-deoxy-D-ribulos-1-ylimino)methylamino]-1-(5-phospho-beta-D-ribosyl)imidazole-4-carboxamide. Its pathway is amino-acid biosynthesis; L-histidine biosynthesis; L-histidine from 5-phospho-alpha-D-ribose 1-diphosphate: step 4/9. The sequence is that of 1-(5-phosphoribosyl)-5-[(5-phosphoribosylamino)methylideneamino] imidazole-4-carboxamide isomerase from Listeria monocytogenes serotype 4b (strain F2365).